We begin with the raw amino-acid sequence, 185 residues long: Prenylated Rab acceptor protein 1 (185 aa).

The Cytoplasmic segment spans residues 1 to 78; it reads MAAEKDQQKD…RNVEYYQSNY (78 aa). The segment at 30–54 is required for interaction with prenylated RAB3A and VAMP2; that stretch reads AGRERLERRRATIRPWSSFVDQRRF. 2 consecutive transmembrane segments (helical) span residues 79–94 and 95–112; these read VFVF…VTSP and MLLV…ILYL. At 113–131 the chain is on the cytoplasmic side; that stretch reads RTLQSKFVLFGREVSPAHQ. A run of 2 helical transmembrane segments spans residues 132-148 and 149-165; these read YALA…LAGA and GSAV…VIGS. The interval 165 to 185 is required for interaction with GDI1; sequence SHAAFHQMEAVDGEELQMEPV. Residues 166–185 are Cytoplasmic-facing; sequence HAAFHQMEAVDGEELQMEPV. The interval 175 to 185 is required for interaction with prenylated RAB3A and VAMP2; that stretch reads VDGEELQMEPV. A homodimerization region spans residues 175–185; that stretch reads VDGEELQMEPV.

It belongs to the PRA1 family. Homodimer. Interacts with VAMP2 (synaptobrevin-2), prenylated Rab proteins, GDI1, NDRG1 and PCLO.

Its subcellular location is the cell membrane. It is found in the cytoplasm. The protein localises to the golgi apparatus. The protein resides in the cytoplasmic vesicle. It localises to the secretory vesicle. Its subcellular location is the synaptic vesicle. General Rab protein regulator required for vesicle formation from the Golgi complex. May control vesicle docking and fusion by mediating the action of Rab GTPases to the SNARE complexes. In addition it inhibits the removal of Rab GTPases from the membrane by GDI1. The chain is Prenylated Rab acceptor protein 1 (RABAC1) from Canis lupus familiaris (Dog).